Consider the following 417-residue polypeptide: 3-oxoacyl-[acyl-carrier-protein] synthase 2 (417 aa).

In terms of domain architecture, Ketosynthase family 3 (KS3) spans 10–416; it reads FPYVVVTGIA…GHNVAIAFGR (407 aa). Active-site for beta-ketoacyl synthase activity residues include C170, H311, and H346.

It belongs to the thiolase-like superfamily. Beta-ketoacyl-ACP synthases family.

The protein localises to the cytoplasm. It catalyses the reaction an ultra-long-chain di-unsaturated fatty acyl-[ACP] + malonyl-[ACP] + H(+) = a 3-oxo-ultra-long-chain di-unsaturated fatty acyl-[ACP] + holo-[ACP] + CO2. The protein operates within lipid metabolism; mycolic acid biosynthesis. In terms of biological role, part of the mycobacterial fatty acid elongation system FAS-II, which is involved in mycolic acid biosynthesis. Catalyzes the elongation of long chain acyl-ACP substrates by the addition of two carbons from malonyl-ACP to an acyl acceptor. Involved in extension of the mycolate chains to full lengths and produces longer chain multiunsaturated hydrocarbons averaging 54 carbons in length. The sequence is that of 3-oxoacyl-[acyl-carrier-protein] synthase 2 (kasB) from Mycobacterium bovis (strain ATCC BAA-935 / AF2122/97).